Here is a 327-residue protein sequence, read N- to C-terminus: Beta-ketoacyl-[acyl-carrier-protein] synthase III 2 (327 aa).

Residues Cys-114 and His-251 contribute to the active site. Positions 252–256 (SANLR) are ACP-binding. Asn-281 is a catalytic residue.

The protein belongs to the thiolase-like superfamily. FabH family. Homodimer.

It is found in the cytoplasm. The enzyme catalyses malonyl-[ACP] + acetyl-CoA + H(+) = 3-oxobutanoyl-[ACP] + CO2 + CoA. The protein operates within lipid metabolism; fatty acid biosynthesis. Its function is as follows. Catalyzes the condensation reaction of fatty acid synthesis by the addition to an acyl acceptor of two carbons from malonyl-ACP. Catalyzes the first condensation reaction which initiates fatty acid synthesis and may therefore play a role in governing the total rate of fatty acid production. Possesses both acetoacetyl-ACP synthase and acetyl transacylase activities. Its substrate specificity determines the biosynthesis of branched-chain and/or straight-chain of fatty acids. The chain is Beta-ketoacyl-[acyl-carrier-protein] synthase III 2 from Bacillus anthracis.